Consider the following 100-residue polypeptide: Urease subunit gamma (100 aa).

Belongs to the urease gamma subunit family. In terms of assembly, heterotrimer of UreA (gamma), UreB (beta) and UreC (alpha) subunits. Three heterotrimers associate to form the active enzyme.

It is found in the cytoplasm. It carries out the reaction urea + 2 H2O + H(+) = hydrogencarbonate + 2 NH4(+). Its pathway is nitrogen metabolism; urea degradation; CO(2) and NH(3) from urea (urease route): step 1/1. This chain is Urease subunit gamma, found in Nitrosospira multiformis (strain ATCC 25196 / NCIMB 11849 / C 71).